The primary structure comprises 305 residues: Coenzyme PQQ synthesis protein B (305 aa).

The protein belongs to the PqqB family.

Its pathway is cofactor biosynthesis; pyrroloquinoline quinone biosynthesis. May be involved in the transport of PQQ or its precursor to the periplasm. The polypeptide is Coenzyme PQQ synthesis protein B (Cupriavidus necator (strain ATCC 17699 / DSM 428 / KCTC 22496 / NCIMB 10442 / H16 / Stanier 337) (Ralstonia eutropha)).